Consider the following 205-residue polypeptide: MWNALKRLPLFPPSPKEDKQLRKERLHWRNMCPSLTETVTALFIHEKPTKGFRALGTGRFMSAFVAVFFNMGLSQKTRPVQLFGYILPLFLKPFVCTVVTTDVYDKDGRFVESKFEEIFNKHARTHKDALTAKEIKQMLKTNREPYDFIGWLSDFIEWKILHTLAQDNGLLTEDAVRGVYDGSLFQQLEKKRSSSSSRGKKQKLP.

The Proline-knot motif lies at 79–88 (PVQLFGYILP). A Phosphoserine modification is found at Ser-183.

Belongs to the caleosin family.

It localises to the lipid droplet. The sequence is that of Probable inactive peroxygenase-like protein from Arabidopsis thaliana (Mouse-ear cress).